Consider the following 111-residue polypeptide: Secreted RxLR effector protein 82 (111 aa).

A signal peptide spans 1–17 (MFHLYLLLVFETRYTCL). Positions 28–31 (RWLR) match the RxLR motif.

Belongs to the RxLR effector family.

Its subcellular location is the secreted. The protein localises to the host nucleus. Secreted effector that acts as an elicitor that induces cell death in host plant cells. This Plasmopara viticola (Downy mildew of grapevine) protein is Secreted RxLR effector protein 82.